Here is a 556-residue protein sequence, read N- to C-terminus: Amidophosphoribosyltransferase (556 aa).

The propeptide occupies 1-57 (MCLAVGVGVRAPKHVPQIRRLGRAGRRLRCVTNCALGSCPIVTVQQPGRDFSSPREE). Cys-58 functions as the Nucleophile in the catalytic mechanism. Residues 58–284 (CGVFGVWAPG…PGELLAIDAD (227 aa)) enclose the Glutamine amidotransferase type-2 domain. Cys-299 serves as a coordination point for [4Fe-4S] cluster. Residues Ser-346, Asp-408, and Asp-409 each contribute to the Mg(2+) site. [4Fe-4S] cluster contacts are provided by Cys-445, Cys-501, and Cys-504.

In the C-terminal section; belongs to the purine/pyrimidine phosphoribosyltransferase family. The cofactor is Mg(2+). [4Fe-4S] cluster serves as cofactor.

The catalysed reaction is 5-phospho-beta-D-ribosylamine + L-glutamate + diphosphate = 5-phospho-alpha-D-ribose 1-diphosphate + L-glutamine + H2O. The protein operates within purine metabolism; IMP biosynthesis via de novo pathway; N(1)-(5-phospho-D-ribosyl)glycinamide from 5-phospho-alpha-D-ribose 1-diphosphate: step 1/2. In terms of biological role, catalyzes the formation of phosphoribosylamine from phosphoribosylpyrophosphate (PRPP) and glutamine. The sequence is that of Amidophosphoribosyltransferase from Mycobacterium leprae (strain TN).